The following is a 282-amino-acid chain: Plant cysteine oxidase 3 (282 aa).

Fe cation contacts are provided by histidine 131, histidine 133, and histidine 202.

Belongs to the cysteine dioxygenase family. It depends on Fe(2+) as a cofactor.

The protein resides in the nucleus. Its subcellular location is the cytoplasm. It carries out the reaction L-cysteine + O2 = 3-sulfino-L-alanine + H(+). In terms of biological role, catalyzes the oxidation of N-terminal cysteine residues (N-Cys), thus preparing the protein for N-end rule pathway-mediated proteasomal degradation, upstream of the N-end rule enzymes ATE1, ATE2 and PRT6. Controls the preparation of the group VII ethylene response factor (ERF-VII) proteins for degradation via the 26S proteasome N-end rule pathway. Acts as an oxygen sensor that controls the stability of ERF-VII proteins, which are stabilized in flooding-induced hypoxia, and regulate transcriptional adaptation to these adverse conditions. The sequence is that of Plant cysteine oxidase 3 from Arabidopsis thaliana (Mouse-ear cress).